Reading from the N-terminus, the 152-residue chain is Small heat shock protein HspA (152 aa).

One can recognise a sHSP domain in the interval 29–139 (TAGEANYPPC…KPRRIPIDNL (111 aa)).

Belongs to the small heat shock protein (HSP20) family.

In Bradyrhizobium diazoefficiens (strain JCM 10833 / BCRC 13528 / IAM 13628 / NBRC 14792 / USDA 110), this protein is Small heat shock protein HspA (hspA).